We begin with the raw amino-acid sequence, 156 residues long: MRPSEKQDNLVRAFKALLKEERFGSQGEIVEALKQEGFENINQSKVSRMLTKFGAVRTRNAKMEMVYCLPTELGVPTVSSSLRELVLDVDHNQALVVIHTGPGAAQLIARMLDSLGKSEGILGVVAGDDTIFITPTLTITTEQLFKSVCELFEYAG.

The protein belongs to the ArgR family.

The protein resides in the cytoplasm. Its pathway is amino-acid biosynthesis; L-arginine biosynthesis [regulation]. Functionally, regulates arginine biosynthesis genes. The chain is Arginine repressor from Vibrio vulnificus (strain CMCP6).